The chain runs to 145 residues: Lysozyme-like protein 4 (145 aa).

The first 19 residues, 1–19, serve as a signal peptide directing secretion; that stretch reads MQLYLVLLLISYLLTPIGA. A C-type lysozyme domain is found at 20 to 145; the sequence is SILGRCTVAK…LDRWLDGCDL (126 aa). 4 cysteine pairs are disulfide-bonded: C25–C143, C49–C130, C84–C95, and C91–C109. Residue E54 is part of the active site.

This sequence belongs to the glycosyl hydrolase 22 family. In terms of assembly, monomer. In terms of tissue distribution, expressed strongly in testis and in epididymis, and weakly in brain and lung. Detected in sperm (at protein level).

It localises to the secreted. Its subcellular location is the cytoplasmic vesicle. It is found in the secretory vesicle. The protein resides in the acrosome. The protein localises to the cell projection. It localises to the cilium. Its subcellular location is the flagellum. Its function is as follows. May be involved in fertilization. Has no detectable bacteriolytic in vitro. Has no lysozyme activity in vitro. The polypeptide is Lysozyme-like protein 4 (Lyzl4) (Mus musculus (Mouse)).